Consider the following 102-residue polypeptide: Iron-sulfur cluster assembly protein CyaY (102 aa).

The protein belongs to the frataxin family.

In terms of biological role, involved in iron-sulfur (Fe-S) cluster assembly. May act as a regulator of Fe-S biogenesis. This Histophilus somni (strain 129Pt) (Haemophilus somnus) protein is Iron-sulfur cluster assembly protein CyaY.